The chain runs to 409 residues: Casein kinase II subunit alpha-1 (409 aa).

The N-terminal stretch at Met-1–His-35 is a signal peptide. Asn-72 carries N-linked (GlcNAc...) asparagine glycosylation. Residues Tyr-110–Phe-395 enclose the Protein kinase domain. ATP contacts are provided by residues Val-116–Val-124 and Lys-139. A glycan (N-linked (GlcNAc...) asparagine) is linked at Asn-188. Asp-227 functions as the Proton acceptor in the catalytic mechanism.

This sequence belongs to the protein kinase superfamily. Ser/Thr protein kinase family. CK2 subfamily. As to quaternary structure, heterotetramer of two catalytic alpha subunits and two regulatory beta subunits. Seems to be present in all plant organs. But seems to be less expressed than CKA2.

The protein localises to the nucleus. The protein resides in the nucleolus. The enzyme catalyses L-seryl-[protein] + ATP = O-phospho-L-seryl-[protein] + ADP + H(+). It carries out the reaction L-threonyl-[protein] + ATP = O-phospho-L-threonyl-[protein] + ADP + H(+). Inhibited by heparin. Casein kinases are operationally defined by their preferential utilization of acidic proteins such as caseins as substrates. Phosphorylates casein in vitro. The alpha chain contains the catalytic site. The tetrameric holoenzyme CK2, composed of two alpha and two beta subunits, phosphorylates the transcription factor GBFl, resulting in stimulation of its DNA binding activity. CK2 phosphorylates the transcription factor PIF1 after an exposure to light, resulting in a proteasome-dependent degradation of PIF1 and promotion of photomorphogenesis. CK2 phosphorylates translation initiation factors. May participate in the regulation of the initiation of translation. Acts as a circadian clock component that maintains the correct period length through phosphorylation of CCA1. Required for the maintenance and control of genomic stability and chromatin structure. May act as an ectokinase that phosphorylates several extracellular proteins. The polypeptide is Casein kinase II subunit alpha-1 (Arabidopsis thaliana (Mouse-ear cress)).